The primary structure comprises 507 residues: Glycerol kinase (507 aa).

Residue T14 participates in ADP binding. Positions 14, 15, and 16 each coordinate ATP. Residue T14 participates in sn-glycerol 3-phosphate binding. R18 is an ADP binding site. R84, E85, Y137, and D247 together coordinate sn-glycerol 3-phosphate. Residues R84, E85, Y137, D247, and Q248 each contribute to the glycerol site. ADP contacts are provided by T269 and G312. ATP contacts are provided by T269, G312, Q316, and G413. 2 residues coordinate ADP: G413 and N417.

This sequence belongs to the FGGY kinase family.

It carries out the reaction glycerol + ATP = sn-glycerol 3-phosphate + ADP + H(+). Its pathway is polyol metabolism; glycerol degradation via glycerol kinase pathway; sn-glycerol 3-phosphate from glycerol: step 1/1. Inhibited by fructose 1,6-bisphosphate (FBP). Functionally, key enzyme in the regulation of glycerol uptake and metabolism. Catalyzes the phosphorylation of glycerol to yield sn-glycerol 3-phosphate. This is Glycerol kinase from Psychromonas ingrahamii (strain DSM 17664 / CCUG 51855 / 37).